The sequence spans 71 residues: Small ribosomal subunit protein eS17 (71 aa).

Belongs to the eukaryotic ribosomal protein eS17 family.

The protein is Small ribosomal subunit protein eS17 of Pyrobaculum arsenaticum (strain DSM 13514 / JCM 11321 / PZ6).